Reading from the N-terminus, the 429-residue chain is Serine hydroxymethyltransferase (429 aa).

(6S)-5,6,7,8-tetrahydrofolate is bound by residues L128 and 132–134; that span reads GHL. Residue K237 is modified to N6-(pyridoxal phosphate)lysine.

This sequence belongs to the SHMT family. In terms of assembly, homodimer. Requires pyridoxal 5'-phosphate as cofactor.

It is found in the cytoplasm. The enzyme catalyses (6R)-5,10-methylene-5,6,7,8-tetrahydrofolate + glycine + H2O = (6S)-5,6,7,8-tetrahydrofolate + L-serine. It participates in one-carbon metabolism; tetrahydrofolate interconversion. The protein operates within amino-acid biosynthesis; glycine biosynthesis; glycine from L-serine: step 1/1. Catalyzes the reversible interconversion of serine and glycine with tetrahydrofolate (THF) serving as the one-carbon carrier. This reaction serves as the major source of one-carbon groups required for the biosynthesis of purines, thymidylate, methionine, and other important biomolecules. Also exhibits THF-independent aldolase activity toward beta-hydroxyamino acids, producing glycine and aldehydes, via a retro-aldol mechanism. The chain is Serine hydroxymethyltransferase from Caulobacter vibrioides (strain ATCC 19089 / CIP 103742 / CB 15) (Caulobacter crescentus).